Consider the following 241-residue polypeptide: tRNA (guanine-N(7)-)-methyltransferase (241 aa).

Over residues 1 to 10 (MTESNDTPIQ) the composition is skewed to polar residues. The interval 1 to 20 (MTESNDTPIQTEEGDERQHR) is disordered. S-adenosyl-L-methionine contacts are provided by Glu-71, Glu-96, Asp-123, and Asp-146. The active site involves Asp-146. Substrate is bound by residues Lys-150, Asp-182, and 219 to 222 (TKFE).

This sequence belongs to the class I-like SAM-binding methyltransferase superfamily. TrmB family.

The enzyme catalyses guanosine(46) in tRNA + S-adenosyl-L-methionine = N(7)-methylguanosine(46) in tRNA + S-adenosyl-L-homocysteine. The protein operates within tRNA modification; N(7)-methylguanine-tRNA biosynthesis. In terms of biological role, catalyzes the formation of N(7)-methylguanine at position 46 (m7G46) in tRNA. The chain is tRNA (guanine-N(7)-)-methyltransferase from Pseudomonas fluorescens (strain Pf0-1).